Consider the following 870-residue polypeptide: Translation initiation factor IF-2 (870 aa).

The segment at 49–284 (SFQNSAPAEK…TKRKERPLPE (236 aa)) is disordered. 2 stretches are compositionally biased toward basic and acidic residues: residues 70-81 (RKNEKKQEDNAG) and 94-109 (QNND…RDHS). Low complexity predominate over residues 116 to 127 (KPKAAALLQQFK). 2 stretches are compositionally biased toward basic and acidic residues: residues 144 to 159 (AKKE…KKEQ) and 168 to 183 (NKES…EKKV). Positions 254 to 279 (RKRRKNKNKKRKQEQKPKKQITKRKE) are enriched in basic residues. Residues 371-540 (KRPPVVTIMG…LLQADMMELK (170 aa)) form the tr-type G domain. Residues 380 to 387 (GHVDHGKT) are G1. 380-387 (GHVDHGKT) is a GTP binding site. The segment at 405 to 409 (GITQK) is G2. The interval 426–429 (DTPG) is G3. GTP-binding positions include 426–430 (DTPGH) and 480–483 (NKMD). The G4 stretch occupies residues 480 to 483 (NKMD). The segment at 516-518 (SAR) is G5.

It belongs to the TRAFAC class translation factor GTPase superfamily. Classic translation factor GTPase family. IF-2 subfamily.

It is found in the cytoplasm. Its function is as follows. One of the essential components for the initiation of protein synthesis. Protects formylmethionyl-tRNA from spontaneous hydrolysis and promotes its binding to the 30S ribosomal subunits. Also involved in the hydrolysis of GTP during the formation of the 70S ribosomal complex. The protein is Translation initiation factor IF-2 of Lactobacillus helveticus (strain DPC 4571).